The sequence spans 124 residues: MATTNQLIRKGRKTIKEKSKVPALEACPQRRGVCTRVYTTTPKKPNSAMRKVCRVRLTSGYEVSSYIGGEGHNLQEHSVVLIRGGRVKDLPGVRYHTVRGALDCAGVKDRKQGRSKYGAKKPKV.

At D89 the chain carries 3-methylthioaspartic acid.

Belongs to the universal ribosomal protein uS12 family. Part of the 30S ribosomal subunit. Contacts proteins S8 and S17. May interact with IF1 in the 30S initiation complex.

In terms of biological role, with S4 and S5 plays an important role in translational accuracy. Interacts with and stabilizes bases of the 16S rRNA that are involved in tRNA selection in the A site and with the mRNA backbone. Located at the interface of the 30S and 50S subunits, it traverses the body of the 30S subunit contacting proteins on the other side and probably holding the rRNA structure together. The combined cluster of proteins S8, S12 and S17 appears to hold together the shoulder and platform of the 30S subunit. The polypeptide is Small ribosomal subunit protein uS12 (Psychrobacter arcticus (strain DSM 17307 / VKM B-2377 / 273-4)).